Reading from the N-terminus, the 75-residue chain is Exodeoxyribonuclease 7 small subunit (75 aa).

It belongs to the XseB family. In terms of assembly, heterooligomer composed of large and small subunits.

Its subcellular location is the cytoplasm. The catalysed reaction is Exonucleolytic cleavage in either 5'- to 3'- or 3'- to 5'-direction to yield nucleoside 5'-phosphates.. Bidirectionally degrades single-stranded DNA into large acid-insoluble oligonucleotides, which are then degraded further into small acid-soluble oligonucleotides. The protein is Exodeoxyribonuclease 7 small subunit of Nostoc punctiforme (strain ATCC 29133 / PCC 73102).